Consider the following 166-residue polypeptide: uncharacterized protein (166 aa).

A run of 4 helical transmembrane segments spans residues 7-27 (VLFK…SLFY), 30-50 (FLFA…YCYI), 69-89 (IETL…KSLL), and 92-112 (NSFF…LVLF).

It to M.jannaschii MJ0795.1 and MJ0785.1.

It is found in the cell membrane. This is an uncharacterized protein from Methanocaldococcus jannaschii (strain ATCC 43067 / DSM 2661 / JAL-1 / JCM 10045 / NBRC 100440) (Methanococcus jannaschii).